A 214-amino-acid chain; its full sequence is MRFLIDTANVEEIREIHEWGVLAGVTTNPSLVAKEGRDFVETLKEILDIVDGPISAEVISTDAKGMIEEGEKLAALSKNIVIKLPMTAEGLKATKYFAKRKIRTNVTLVFSANQALLAARAGASFVSPFLGRLDDIGQDGMQLIEDIAEIFSVHGIDTEIIAASVRHPVHVTEAARRGSHFATIPAKVFKQLIAHPLTDSGLEKFLADWASMQK.

The active-site Schiff-base intermediate with substrate is the K83.

It belongs to the transaldolase family. Type 3B subfamily.

The protein localises to the cytoplasm. It carries out the reaction D-sedoheptulose 7-phosphate + D-glyceraldehyde 3-phosphate = D-erythrose 4-phosphate + beta-D-fructose 6-phosphate. The protein operates within carbohydrate degradation; pentose phosphate pathway; D-glyceraldehyde 3-phosphate and beta-D-fructose 6-phosphate from D-ribose 5-phosphate and D-xylulose 5-phosphate (non-oxidative stage): step 2/3. Functionally, transaldolase is important for the balance of metabolites in the pentose-phosphate pathway. In Brevibacillus brevis (strain 47 / JCM 6285 / NBRC 100599), this protein is Probable transaldolase.